A 251-amino-acid chain; its full sequence is Segregation and condensation protein A (251 aa).

It belongs to the ScpA family. As to quaternary structure, component of a cohesin-like complex composed of ScpA, ScpB and the Smc homodimer, in which ScpA and ScpB bind to the head domain of Smc. The presence of the three proteins is required for the association of the complex with DNA.

Its subcellular location is the cytoplasm. Functionally, participates in chromosomal partition during cell division. May act via the formation of a condensin-like complex containing Smc and ScpB that pull DNA away from mid-cell into both cell halves. The sequence is that of Segregation and condensation protein A from Clostridium botulinum (strain Eklund 17B / Type B).